The sequence spans 141 residues: Large ribosomal subunit protein uL22 (141 aa).

A disordered region spans residues 108-141 (KSEEKKTVAKKTTTTKAPAKKTTSTKKATVKKES). Residues 117–134 (KKTTTTKAPAKKTTSTKK) are compositionally biased toward low complexity.

This sequence belongs to the universal ribosomal protein uL22 family. In terms of assembly, part of the 50S ribosomal subunit.

Functionally, this protein binds specifically to 23S rRNA; its binding is stimulated by other ribosomal proteins, e.g. L4, L17, and L20. It is important during the early stages of 50S assembly. It makes multiple contacts with different domains of the 23S rRNA in the assembled 50S subunit and ribosome. Its function is as follows. The globular domain of the protein is located near the polypeptide exit tunnel on the outside of the subunit, while an extended beta-hairpin is found that lines the wall of the exit tunnel in the center of the 70S ribosome. The polypeptide is Large ribosomal subunit protein uL22 (Campylobacter jejuni subsp. jejuni serotype O:2 (strain ATCC 700819 / NCTC 11168)).